The following is a 466-amino-acid chain: Alpha-1A adrenergic receptor (466 aa).

Topologically, residues 1–25 are extracellular; that stretch reads MVFLSGNASDSSNCTQPPAPVNIPK. N-linked (GlcNAc...) asparagine glycosylation is found at asparagine 7 and asparagine 13. A helical transmembrane segment spans residues 26 to 51; sequence AILLGVILGVLILFGVPGNILVILSV. The Cytoplasmic segment spans residues 52 to 63; sequence ACHRHLHSVTHY. The chain crosses the membrane as a helical span at residues 64-89; it reads YIVNLAVADLLLTSTVLPFSAIFEIL. Over 90–99 the chain is Extracellular; that stretch reads GYWAFGRVFC. The chain crosses the membrane as a helical span at residues 100 to 122; that stretch reads NIWAAVDVLCCTASIMSLCIISI. Topologically, residues 123–143 are cytoplasmic; the sequence is DRYIGVSYPLRYPTIVTQRRG. The helical transmembrane segment at 144–168 threads the bilayer; the sequence is LRALLCLWALSLVISIGPLFGWRQP. The Extracellular portion of the chain corresponds to 169–181; the sequence is APQDETICQINED. A helical membrane pass occupies residues 182–205; sequence PSYVLFSALGSFYVPLAIILVMYC. Topologically, residues 206-272 are cytoplasmic; sequence RVYVVAKRES…KFSREKKAAK (67 aa). The chain crosses the membrane as a helical span at residues 273 to 297; the sequence is TLGIVVGCFVLCWLPFFLVMPIGSF. At 298 to 304 the chain is on the extracellular side; sequence FPDFKPS. The helical transmembrane segment at 305–329 threads the bilayer; that stretch reads ETVFKIVFWLGYLNSCINPIIYPCS. Over 330-466 the chain is Cytoplasmic; the sequence is SQEFKKAFQN…ISLSENGEEV (137 aa). The short motif at 334 to 349 is the Nuclear localization signal element; sequence KKAFQNVLKIQCLRRK. Cysteine 345 carries the S-palmitoyl cysteine lipid modification.

It belongs to the G-protein coupled receptor 1 family. Adrenergic receptor subfamily. ADRA1A sub-subfamily. As to quaternary structure, homo- and heterooligomer. Heterooligomerizes with ADRA1B homooligomers in cardiac myocytes. Interacts with CAVIN4.

It localises to the nucleus membrane. The protein resides in the cell membrane. It is found in the cytoplasm. Its subcellular location is the membrane. The protein localises to the caveola. This alpha-adrenergic receptor mediates its action by association with G proteins that activate a phosphatidylinositol-calcium second messenger system. Its effect is mediated by G(q) and G(11) proteins. Nuclear ADRA1A-ADRA1B heterooligomers regulate phenylephrine (PE)-stimulated ERK signaling in cardiac myocytes. The sequence is that of Alpha-1A adrenergic receptor (ADRA1A) from Cavia porcellus (Guinea pig).